Here is a 902-residue protein sequence, read N- to C-terminus: AP-4 complex accessory subunit RUSC1 (902 aa).

Disordered stretches follow at residues 31-67, 81-155, 189-227, and 247-450; these read ELQE…SNSP, LENR…PGTC, QDVP…KTEP, and KTTE…AQAG. Residues 94 to 112 are compositionally biased toward low complexity; that stretch reads AASPSDPGCSSSLSSCSDL. The span at 249 to 261 shows a compositional bias: low complexity; the sequence is TENNNTGWKNNGN. Positions 277-289 are enriched in polar residues; that stretch reads WKTNTRITDSGSK. Positions 291–309 are enriched in basic and acidic residues; the sequence is DAGKIDGGWRSDVSEEPVP. Pro residues-rich tracts occupy residues 381-390 and 398-407; these read PAPPVPPRDP and PPRPPPPPVP. Residues 433–450 show a composition bias toward low complexity; the sequence is PAAGEEAPAAKEPGAQAG. The segment at 470 to 605 is interaction with TRAF6; the sequence is MAEAQSGTGQ…FHAFILGLLN (136 aa). Residues 522–666 form the RUN domain; that stretch reads DVGHLVLTTL…LTFHLDLLFE (145 aa). An interaction with IKBKG region spans residues 606–672; it reads TKQLELWFSS…LLFEHHHHLP (67 aa). 2 disordered regions span residues 706-729 and 747-776; these read LRGT…PGSW and GFPL…TDEM. Residues 844–902 enclose the SH3 domain; it reads QTHRAVRALCDHTAARPDQLSFRRGEVLRVITTVDEDWLRCGRDGMEGLVPVGYTSLVL.

In terms of assembly, associated component of the adapter-like complex 4 (AP-4). Interacts with IKBKG and TRAF6. Interacts with F-actin, acetylated actin, TUBB3, STX1A, KIF5B and KLC1. Post-translationally, phosphorylated on serine residues following nuclear translocation. Polyubiquitinated; polyubiquitination involves TRAF6. Predominantly expressed in brain.

Its subcellular location is the cytoplasm. The protein localises to the nucleus. It localises to the cytoskeleton. It is found in the cytoplasmic vesicle. The protein resides in the early endosome. Its subcellular location is the postsynaptic density. The protein localises to the golgi apparatus. Associates with the adapter-like complex 4 (AP-4) and may therefore play a role in vesicular trafficking of proteins at the trans-Golgi network. Signaling adapter which plays a role in neuronal differentiation. Involved in regulation of NGF-dependent neurite outgrowth. May play a role in neuronal vesicular trafficking, specifically involving pre-synaptic membrane proteins. Seems to be involved in signaling pathways that are regulated by the prolonged activation of MAPK. Can regulate the polyubiquitination of IKBKG and thus may be involved in regulation of the NF-kappa-B pathway. The chain is AP-4 complex accessory subunit RUSC1 from Homo sapiens (Human).